The primary structure comprises 171 residues: Small ribosomal subunit protein uS13 (171 aa).

2 disordered regions span residues 1 to 22 and 142 to 171; these read MGKA…AAKK and RHEK…RKKE. Residues 10–22 are compositionally biased toward basic and acidic residues; the sequence is KSDKEAAKPAAKK. Positions 142 to 158 are enriched in basic residues; that stretch reads RHEKGKKVRGQRTRSNG.

This sequence belongs to the universal ribosomal protein uS13 family. Part of the 30S ribosomal subunit. Forms a loose heterodimer with protein S19. Forms two bridges to the 50S subunit in the 70S ribosome.

Located at the top of the head of the 30S subunit, it contacts several helices of the 16S rRNA. In the 70S ribosome it contacts the 23S rRNA (bridge B1a) and protein L5 of the 50S subunit (bridge B1b), connecting the 2 subunits; these bridges are implicated in subunit movement. This chain is Small ribosomal subunit protein uS13, found in Thermoplasma volcanium (strain ATCC 51530 / DSM 4299 / JCM 9571 / NBRC 15438 / GSS1).